A 443-amino-acid chain; its full sequence is Dihydroorotate dehydrogenase (quinone), mitochondrial (443 aa).

Residues 1-21 (MYQRSLFRGVAQGLKRSSVRF) constitute a mitochondrion transit peptide. The chain crosses the membrane as a helical span at residues 38–54 (WKLLSVIGSFTAGVAIY). FMN contacts are provided by residues 122-126 (AGFDK) and S146. Position 126 (K126) interacts with substrate. Phosphoserine is present on S168. Position 171–175 (171–175 (NRYGF)) interacts with substrate. FMN-binding residues include N234 and N264. 264–269 (NVSSPN) is a binding site for substrate. Residue S267 is the Nucleophile of the active site. K306 serves as a coordination point for FMN. A substrate-binding site is contributed by 335 to 336 (NT). Residues G358, G387, and 408–409 (YT) contribute to the FMN site.

It belongs to the dihydroorotate dehydrogenase family. Type 2 subfamily. Requires FMN as cofactor.

It is found in the mitochondrion inner membrane. The enzyme catalyses (S)-dihydroorotate + a quinone = orotate + a quinol. The protein operates within pyrimidine metabolism; UMP biosynthesis via de novo pathway; orotate from (S)-dihydroorotate (quinone route): step 1/1. Functionally, in the de novo pyrimidine biosynthesis pathway, catalyzes the stereospecific oxidation of (S)-dihydroorotate to orotate with reduction of flavin and the transfer of electrons to ubiquinone, which is part of the respiratory chain. Does not use fumarate and NAD as electron acceptors. The chain is Dihydroorotate dehydrogenase (quinone), mitochondrial (ura3) from Schizosaccharomyces pombe (strain 972 / ATCC 24843) (Fission yeast).